We begin with the raw amino-acid sequence, 345 residues long: Probable fructokinase-3 (345 aa).

It belongs to the carbohydrate kinase PfkB family.

The catalysed reaction is D-fructose + ATP = D-fructose 6-phosphate + ADP + H(+). Its pathway is glycan biosynthesis; starch biosynthesis. Functionally, may play an important role in maintaining the flux of carbon towards starch formation. This is Probable fructokinase-3 from Arabidopsis thaliana (Mouse-ear cress).